Here is a 458-residue protein sequence, read N- to C-terminus: tRNA modification GTPase MnmE (458 aa).

Residues arginine 26, glutamate 88, and arginine 127 each contribute to the (6S)-5-formyl-5,6,7,8-tetrahydrofolate site. Residues 224-378 form the TrmE-type G domain; that stretch reads GLSTAIIGRP…IEDRINQLFF (155 aa). Asparagine 234 lines the K(+) pocket. Residues 234–239, 253–259, and 278–281 each bind GTP; these read NVGKSS, TDIAGTT, and DTAG. Serine 238 is a binding site for Mg(2+). K(+) is bound by residues threonine 253, isoleucine 255, and threonine 258. Threonine 259 contributes to the Mg(2+) binding site. Position 458 (lysine 458) interacts with (6S)-5-formyl-5,6,7,8-tetrahydrofolate.

It belongs to the TRAFAC class TrmE-Era-EngA-EngB-Septin-like GTPase superfamily. TrmE GTPase family. In terms of assembly, homodimer. Heterotetramer of two MnmE and two MnmG subunits. K(+) is required as a cofactor.

It is found in the cytoplasm. Its function is as follows. Exhibits a very high intrinsic GTPase hydrolysis rate. Involved in the addition of a carboxymethylaminomethyl (cmnm) group at the wobble position (U34) of certain tRNAs, forming tRNA-cmnm(5)s(2)U34. The chain is tRNA modification GTPase MnmE from Streptococcus pyogenes serotype M4 (strain MGAS10750).